Consider the following 144-residue polypeptide: Small ribosomal subunit protein uS9 (144 aa).

Thr2 carries the post-translational modification N-acetylthreonine. The interval 124 to 144 (RRESKKFGGPGARARYQKSYR) is disordered.

The protein belongs to the universal ribosomal protein uS9 family.

The polypeptide is Small ribosomal subunit protein uS9 (rps-16) (Caenorhabditis elegans).